Reading from the N-terminus, the 508-residue chain is ATP synthase subunit alpha, chloroplastic (508 aa).

An ATP-binding site is contributed by 173-180 (GDRQTGKT).

The protein belongs to the ATPase alpha/beta chains family. In terms of assembly, F-type ATPases have 2 components, CF(1) - the catalytic core - and CF(0) - the membrane proton channel. CF(1) has five subunits: alpha(3), beta(3), gamma(1), delta(1), epsilon(1). CF(0) has four main subunits: a, b, b' and c.

It is found in the plastid. The protein localises to the chloroplast thylakoid membrane. It carries out the reaction ATP + H2O + 4 H(+)(in) = ADP + phosphate + 5 H(+)(out). In terms of biological role, produces ATP from ADP in the presence of a proton gradient across the membrane. The alpha chain is a regulatory subunit. The protein is ATP synthase subunit alpha, chloroplastic of Chara vulgaris (Common stonewort).